Here is a 1002-residue protein sequence, read N- to C-terminus: Calmin (1002 aa).

An actin-binding region spans residues 1–288 (MAAHEWDWFQ…IMTYVAQFLE (288 aa)). The region spanning 32 to 139 (NVQKRTFTRW…LIWNIILFFQ (108 aa)) is the Calponin-homology (CH) 1 domain. A compositionally biased stretch (low complexity) spans 149-168 (RNSPSSSLSPGSGGTDSDSS). The segment at 149–180 (RNSPSSSLSPGSGGTDSDSSFPPTPTAERSVA) is disordered. A Calponin-homology (CH) 2 domain is found at 187–291 (RKAIKALLAW…YVAQFLERFP (105 aa)). Serine 301 and serine 402 each carry phosphoserine. 4 disordered regions span residues 389 to 418 (QGGP…GRSN), 500 to 532 (NNNS…GENT), 581 to 716 (NKVP…SPPL), and 749 to 911 (DLKN…DSSI). Residues 396–409 (SDISEPSPESSILS) show a composition bias toward low complexity. A compositionally biased stretch (polar residues) spans 500 to 509 (NNNSQSSSCN). Residues 585–606 (SPHETKPDEDAEAFENHAEKLG) show a composition bias toward basic and acidic residues. Positions 607-617 (KRSIKSAHKKK) are enriched in basic residues. 2 stretches are compositionally biased toward basic and acidic residues: residues 618–635 (DSPE…HQDS) and 650–659 (PVDKKPEVHE). Serine 619 bears the Phosphoserine mark. Over residues 681–697 (GVGEELSSSPPSSCVSL) the composition is skewed to low complexity. At threonine 699 the chain carries Phosphothreonine. Phosphoserine is present on residues serine 713 and serine 769. Low complexity predominate over residues 776-794 (GSQSSSSSSVPGESLPSAS). Residues 818 to 834 (PHEDHQQRETKENDPMD) are compositionally biased toward basic and acidic residues. Positions 835-846 (SHQSQESPNLEN) are enriched in polar residues. Phosphoserine is present on residues serine 838 and serine 841. Residues 854–863 (NVTKESISSK) are compositionally biased toward basic and acidic residues. Polar residues predominate over residues 898–910 (YSIPSRTSHSDSS). At serine 907 the chain carries Phosphoserine. The helical; Anchor for type IV membrane protein transmembrane segment at 977–997 (MMYFILFLWLLVYCLLLFPQL) threads the bilayer.

Widely expressed at intermediate level.

It is found in the membrane. This is Calmin (CLMN) from Homo sapiens (Human).